The primary structure comprises 402 residues: Septin CDC11 (402 aa).

An N-acetylmethionine modification is found at Met1. Ser4 carries the post-translational modification Phosphoserine. Residues 14–21 (RKRKTLKK) carry the Basic motif motif. Residues 21–307 (KSINFSIMII…ENYRTEALSG (287 aa)) enclose the Septin-type G domain. The interval 31 to 38 (GESGSGRS) is G1 motif. 31 to 38 (GESGSGRS) is a binding site for GTP. A G3 motif region spans residues 89–92 (DTPN). A G4 motif region spans residues 171 to 174 (SKAD). Residues 172 to 180 (KADSLTPKE) and Gly233 contribute to the GTP site. Residues 318–376 (AKQEISESDYLMKEEQIKLEEERLRKFEERVHQDLINKRKELLERENELKEIEKRLLAE) adopt a coiled-coil conformation. The residue at position 394 (Ser394) is a Phosphoserine; by CDC28. Ser395 carries the post-translational modification Phosphoserine; by GIN4.

Belongs to the TRAFAC class TrmE-Era-EngA-EngB-Septin-like GTPase superfamily. Septin GTPase family. As to quaternary structure, component of the septin complex which consists of CDC3, CDC10, CDC11, CDC12 and probably SEP7. The purified septin complex appeared to have a stoichiometry of 2 CDC3, 1 to 2 CDC10, 1 CDC11, 2 CDC12, and 1 or none SEP7 subunit. Interacts with HSL1. Hyphal induction causes immediate phosphorylation at Ser-395 by GIN4 and at Ser-394 by CDC28-CCN1. GIN4 phosphorylation at Ser-395 primes CDC11 for further phosphorylation by CDC28-CCN1. CDC28-HGC1 then maintains CDC11 phosphorylation throughout hyphal growth. Ser-4 is also phosphorylated in yeast cells but not hyphal cells. In terms of processing, met-1 is acetylated.

It is found in the bud neck. Functionally, septins are GTPases involved in cytokinesis that assemble early in the cell cycle as a patch at the incipient bud site and form a ring before bud emergence, which transforms into an hour-glass shaped collar of cortical filaments that spans both sides of the mother-bud neck. This collar persists until just before cytokinesis, when it splits into two rings that occupy opposite sides of the neck. The septins at the bud neck serve as a structural scaffold that recruits different components involved in diverse processes at specific stages during the cell cycle. Many proteins bind asymmetrically to the septin collar. The septin assembly is regulated by protein kinase GIN4. Septins are also involved in cell morphogenesis, chlamydospores morphogenesis, bud site selection, chitin deposition, cell cycle regulation, cell compartmentalization, and spore wall formation. CDC11 is required for the correct localization of SEC3 at bud tips and bud necks. Plays a key role in invasive growth and virulence. In Candida albicans (strain SC5314 / ATCC MYA-2876) (Yeast), this protein is Septin CDC11 (CDC11).